The sequence spans 376 residues: 4-hydroxy-3-methylbut-2-enyl diphosphate reductase (376 aa).

A [4Fe-4S] cluster-binding site is contributed by Cys-19. Positions 48 and 99 each coordinate (2E)-4-hydroxy-3-methylbut-2-enyl diphosphate. Dimethylallyl diphosphate contacts are provided by His-48 and His-99. Isopentenyl diphosphate-binding residues include His-48 and His-99. [4Fe-4S] cluster is bound at residue Cys-121. His-149 is a binding site for (2E)-4-hydroxy-3-methylbut-2-enyl diphosphate. His-149 serves as a coordination point for dimethylallyl diphosphate. His-149 is an isopentenyl diphosphate binding site. Glu-151 (proton donor) is an active-site residue. Thr-208 provides a ligand contact to (2E)-4-hydroxy-3-methylbut-2-enyl diphosphate. Position 236 (Cys-236) interacts with [4Fe-4S] cluster. (2E)-4-hydroxy-3-methylbut-2-enyl diphosphate-binding residues include Ser-264, Asn-266, and Ser-307. Ser-264, Asn-266, and Ser-307 together coordinate dimethylallyl diphosphate. The isopentenyl diphosphate site is built by Ser-264, Asn-266, and Ser-307.

This sequence belongs to the IspH family. [4Fe-4S] cluster is required as a cofactor.

It carries out the reaction isopentenyl diphosphate + 2 oxidized [2Fe-2S]-[ferredoxin] + H2O = (2E)-4-hydroxy-3-methylbut-2-enyl diphosphate + 2 reduced [2Fe-2S]-[ferredoxin] + 2 H(+). It catalyses the reaction dimethylallyl diphosphate + 2 oxidized [2Fe-2S]-[ferredoxin] + H2O = (2E)-4-hydroxy-3-methylbut-2-enyl diphosphate + 2 reduced [2Fe-2S]-[ferredoxin] + 2 H(+). It functions in the pathway isoprenoid biosynthesis; dimethylallyl diphosphate biosynthesis; dimethylallyl diphosphate from (2E)-4-hydroxy-3-methylbutenyl diphosphate: step 1/1. Its pathway is isoprenoid biosynthesis; isopentenyl diphosphate biosynthesis via DXP pathway; isopentenyl diphosphate from 1-deoxy-D-xylulose 5-phosphate: step 6/6. Its function is as follows. Catalyzes the conversion of 1-hydroxy-2-methyl-2-(E)-butenyl 4-diphosphate (HMBPP) into a mixture of isopentenyl diphosphate (IPP) and dimethylallyl diphosphate (DMAPP). Acts in the terminal step of the DOXP/MEP pathway for isoprenoid precursor biosynthesis. This chain is 4-hydroxy-3-methylbut-2-enyl diphosphate reductase, found in Treponema pallidum (strain Nichols).